A 407-amino-acid polypeptide reads, in one-letter code: Arrestin domain-containing protein 2 (407 aa).

Belongs to the arrestin family. Interacts with WWP1 (via WW domains).

The polypeptide is Arrestin domain-containing protein 2 (Arrdc2) (Mus musculus (Mouse)).